We begin with the raw amino-acid sequence, 81 residues long: Short neurotoxin 2 (81 aa).

The signal sequence occupies residues 1–21; sequence MKTLLLTLVVVTIVCLDLGYT. Intrachain disulfides connect cysteine 24-cysteine 43, cysteine 38-cysteine 60, cysteine 62-cysteine 73, and cysteine 74-cysteine 79.

The protein belongs to the three-finger toxin family. Short-chain subfamily. Type I alpha-neurotoxin sub-subfamily. As to expression, expressed by the venom gland.

Its subcellular location is the secreted. Functionally, binds to muscle nicotinic acetylcholine receptor (nAChR) and inhibit acetylcholine from binding to the receptor, thereby impairing neuromuscular transmission. This chain is Short neurotoxin 2, found in Drysdalia coronoides (White-lipped snake).